Reading from the N-terminus, the 327-residue chain is E3 ubiquitin ligase Rnf121 (327 aa).

Helical transmembrane passes span 50 to 70 (MHAE…LLLV), 79 to 96 (SYNM…VYFT), 99 to 119 (LHWW…AYIT), 148 to 168 (ATGI…NLLF), and 173 to 193 (EDAM…GVLG). The segment at 226 to 276 (CAVCGQQIFVDVNEEGIIENTYRLSCNHVFHEFCIRGWCIVGKKQTCPYCK) adopts an RING-type; atypical zinc-finger fold.

The protein belongs to the RNF121 family.

It is found in the endoplasmic reticulum membrane. It carries out the reaction S-ubiquitinyl-[E2 ubiquitin-conjugating enzyme]-L-cysteine + [acceptor protein]-L-lysine = [E2 ubiquitin-conjugating enzyme]-L-cysteine + N(6)-ubiquitinyl-[acceptor protein]-L-lysine.. Its pathway is protein modification; protein ubiquitination. Functionally, E3 ubiquitin ligase which accepts ubiquitin and transfers it to substrates thereby promoting their degradation by the endoplasmic reticulum-associated degradation (ERAD) pathway which is a pathway involved in ubiquitin-dependent degradation of misfolded endoplasmic reticulum proteins. May regulate the unfolded protein response to reduce endoplasmic reticulum stress. The chain is E3 ubiquitin ligase Rnf121 (rnf121) from Xenopus laevis (African clawed frog).